Consider the following 618-residue polypeptide: Mitochondrial Rho GTPase 2 (618 aa).

At 1-591 (MKRDVRILLL…LNAVELGAAS (591 aa)) the chain is on the cytoplasmic side. A Miro 1 domain is found at 2 to 168 (KRDVRILLLG…FYYAQKAVLH (167 aa)). The GTP site is built by Gly-16, Lys-17, Thr-18, and Ser-19. Thr-18 lines the Mg(2+) pocket. Mg(2+) is bound by residues Pro-35 and Asp-57. Residues Ser-59, Asn-118, Lys-119, Asp-121, Ala-149, and Lys-150 each contribute to the GTP site. EF-hand domains are found at residues 184-219 (ACSRALTRIFNLSDQDNNQILSDDELNYFQKSCFGN) and 304-339 (LGYQFLQRLFEKHDKDQDGALSPAELQNFFSVFPCM). Ca(2+)-binding residues include Asp-197, Asp-199, Asn-201, Glu-208, Asp-317, Asp-319, Asp-321, and Glu-328. The 164-residue stretch at 416-579 (RNVFLCKVLG…YTKLATAATF (164 aa)) folds into the Miro 2 domain. Residues Gly-428, Gly-430, Lys-431, Ser-432, and Ala-433 each coordinate GTP. Residue Ser-432 participates in Mg(2+) binding. Glu-474 is a binding site for Mg(2+). GTP-binding residues include Lys-528, Asp-530, and Cys-559. The helical; Anchor for type IV membrane protein transmembrane segment at 592–614 (FWLRVALGAAVTALVGFTLYRVL) threads the bilayer. Topologically, residues 615–618 (AKNK) are mitochondrial intermembrane.

It belongs to the mitochondrial Rho GTPase family. Homodimer.

The protein localises to the mitochondrion outer membrane. The catalysed reaction is GTP + H2O = GDP + phosphate + H(+). The enzyme catalyses ATP + H2O = ADP + phosphate + H(+). It carries out the reaction UTP + H2O = UDP + phosphate + H(+). In terms of biological role, atypical mitochondrial nucleoside-triphosphatase (NTPase) involved in mitochondrial trafficking. Probably involved in control of anterograde transport of mitochondria and their subcellular distribution. Can hydrolyze GTP, ATP and UTP. The sequence is that of Mitochondrial Rho GTPase 2 (RHOT2) from Gallus gallus (Chicken).